We begin with the raw amino-acid sequence, 309 residues long: tRNA pseudouridine synthase B (309 aa).

The Nucleophile role is filled by Asp-52.

It belongs to the pseudouridine synthase TruB family. Type 1 subfamily.

It catalyses the reaction uridine(55) in tRNA = pseudouridine(55) in tRNA. Its function is as follows. Responsible for synthesis of pseudouridine from uracil-55 in the psi GC loop of transfer RNAs. This Leptospira interrogans serogroup Icterohaemorrhagiae serovar Lai (strain 56601) protein is tRNA pseudouridine synthase B.